The chain runs to 392 residues: Protein NolC (392 aa).

Positions 2 to 71 (KRDLYETLGV…RAAYDRYGHA (70 aa)) constitute a J domain. Disordered stretches follow at residues 103–142 (RRDDGRRSSAPLLGRSRTRCGPSLQHGDHPRGGLFRQDGA) and 157–244 (LGRE…TGLR). Positions 157-170 (LGREAGHQPEDLRH) are enriched in basic and acidic residues. Positions 171 to 185 (LPGLRPYPRRPGLLL) are enriched in low complexity. The segment covering 186–203 (DRTHLPDLRRSRSDDHRS) has biased composition (basic and acidic residues). The span at 227–241 (HRGRHAYPPLRRGRT) shows a compositional bias: basic residues.

In Rhizobium fredii (Sinorhizobium fredii), this protein is Protein NolC (nolC).